The primary structure comprises 515 residues: Chromosomal replication initiator protein DnaA (515 aa).

A domain I, interacts with DnaA modulators region spans residues 1-89; sequence MVADQAVLSS…LLAISIDANL (89 aa). The segment at 89–172 is domain II; that stretch reads LQPPRTPSSE…APPSTSAETS (84 aa). Disordered stretches follow at residues 90-130 and 142-171; these read QPPR…SRRA and PPAD…SAET. Low complexity-rich tracts occupy residues 102–114 and 143–160; these read SSLA…AAAP and PADV…NGKP. The tract at residues 173 to 389 is domain III, AAA+ region; that stretch reads RLNDRYHFET…GALIRVTAFA (217 aa). 4 residues coordinate ATP: Gly-217, Gly-219, Lys-220, and Thr-221. Residues 390-515 form a domain IV, binds dsDNA region; the sequence is SLNRQTVDIE…NEIKRKQRGA (126 aa).

It belongs to the DnaA family. As to quaternary structure, oligomerizes as a right-handed, spiral filament on DNA at oriC.

It localises to the cytoplasm. Its function is as follows. Plays an essential role in the initiation and regulation of chromosomal replication. ATP-DnaA binds to the origin of replication (oriC) to initiate formation of the DNA replication initiation complex once per cell cycle. Binds the DnaA box (a 9 base pair repeat at the origin) and separates the double-stranded (ds)DNA. Forms a right-handed helical filament on oriC DNA; dsDNA binds to the exterior of the filament while single-stranded (ss)DNA is stabiized in the filament's interior. The ATP-DnaA-oriC complex binds and stabilizes one strand of the AT-rich DNA unwinding element (DUE), permitting loading of DNA polymerase. After initiation quickly degrades to an ADP-DnaA complex that is not apt for DNA replication. Binds acidic phospholipids. The polypeptide is Chromosomal replication initiator protein DnaA (Micrococcus luteus (strain ATCC 4698 / DSM 20030 / JCM 1464 / CCM 169 / CCUG 5858 / IAM 1056 / NBRC 3333 / NCIMB 9278 / NCTC 2665 / VKM Ac-2230) (Micrococcus lysodeikticus)).